A 593-amino-acid polypeptide reads, in one-letter code: Alanine--tRNA ligase (593 aa).

Zn(2+) is bound by residues H456, H460, C558, and H562.

It belongs to the class-II aminoacyl-tRNA synthetase family. It depends on Zn(2+) as a cofactor.

The protein resides in the cytoplasm. It catalyses the reaction tRNA(Ala) + L-alanine + ATP = L-alanyl-tRNA(Ala) + AMP + diphosphate. Functionally, catalyzes the attachment of alanine to tRNA(Ala) in a two-step reaction: alanine is first activated by ATP to form Ala-AMP and then transferred to the acceptor end of tRNA(Ala). Also edits incorrectly charged Ser-tRNA(Ala) and Gly-tRNA(Ala) via its editing domain. The protein is Alanine--tRNA ligase (alaS) of Borrelia hermsii (strain HS1 / DAH).